The sequence spans 256 residues: tRNA-cytidine(32) 2-sulfurtransferase 1 (256 aa).

The PP-loop motif signature appears at 38–43 (SGGKDS). [4Fe-4S] cluster-binding residues include Cys-113, Cys-116, and Cys-204.

The protein belongs to the TtcA family. Homodimer. Mg(2+) serves as cofactor. The cofactor is [4Fe-4S] cluster.

It is found in the cytoplasm. It catalyses the reaction cytidine(32) in tRNA + S-sulfanyl-L-cysteinyl-[cysteine desulfurase] + AH2 + ATP = 2-thiocytidine(32) in tRNA + L-cysteinyl-[cysteine desulfurase] + A + AMP + diphosphate + H(+). It participates in tRNA modification. Functionally, catalyzes the ATP-dependent 2-thiolation of cytidine in position 32 of tRNA, to form 2-thiocytidine (s(2)C32). The sulfur atoms are provided by the cysteine/cysteine desulfurase (IscS) system. The polypeptide is tRNA-cytidine(32) 2-sulfurtransferase 1 (Francisella philomiragia subsp. philomiragia (strain ATCC 25017 / CCUG 19701 / FSC 153 / O#319-036)).